Consider the following 438-residue polypeptide: UDP-N-acetylglucosamine 1-carboxyvinyltransferase (438 aa).

Lys35–Asn36 contributes to the phosphoenolpyruvate binding site. Arg105 contributes to the UDP-N-acetyl-alpha-D-glucosamine binding site. Cys129 (proton donor) is an active-site residue. Position 129 is a 2-(S-cysteinyl)pyruvic acid O-phosphothioketal (Cys129). UDP-N-acetyl-alpha-D-glucosamine contacts are provided by residues Arg134–Leu138, Asp321, and Val343.

The protein belongs to the EPSP synthase family. MurA subfamily.

The protein resides in the cytoplasm. It carries out the reaction phosphoenolpyruvate + UDP-N-acetyl-alpha-D-glucosamine = UDP-N-acetyl-3-O-(1-carboxyvinyl)-alpha-D-glucosamine + phosphate. Its pathway is cell wall biogenesis; peptidoglycan biosynthesis. In terms of biological role, cell wall formation. Adds enolpyruvyl to UDP-N-acetylglucosamine. The sequence is that of UDP-N-acetylglucosamine 1-carboxyvinyltransferase from Synechocystis sp. (strain ATCC 27184 / PCC 6803 / Kazusa).